The sequence spans 322 residues: Ras association domain-containing protein 4 (322 aa).

Residues 96–161 (EASPQDSKVP…SKSRAPSEAQ (66 aa)) are disordered. The residue at position 142 (serine 142) is a Phosphoserine. The Ras-associating domain maps to 175-264 (YNHKTSVFTP…KIFLMEADLS (90 aa)). The region spanning 271–318 (VAQYIKFEMPVLDSFVEKLKEEEEREIIKLTMKFQALRLTMLQRLEQL) is the SARAH domain.

In terms of assembly, interacts directly with activated KRAS in a GTP-dependent manner.

Functionally, potential tumor suppressor. May act as a KRAS effector protein. May promote apoptosis and cell cycle arrest. The sequence is that of Ras association domain-containing protein 4 (Rassf4) from Mus musculus (Mouse).